Reading from the N-terminus, the 222-residue chain is Protein THYLAKOID ASSEMBLY 8, chloroplastic (222 aa).

Residues 1–32 (MALSLSQTRPPSLSHSHTLSVIVPKRTFVSIR) constitute a chloroplast transit peptide. 2 PPR repeats span residues 115–149 (DLVL…DQRS) and 150–184 (DDKA…GWGS).

This sequence belongs to the PPR family. P subfamily.

It is found in the plastid. It localises to the chloroplast thylakoid membrane. In terms of biological role, essential protein required during embryogenesis. Mediates group II organellar RNA introns splicing (e.g. ycf3-2 and trnA). Binds weakly to specific RNA. Promotes the biogenesis of chloroplast thylakoid membranes. In Arabidopsis thaliana (Mouse-ear cress), this protein is Protein THYLAKOID ASSEMBLY 8, chloroplastic.